The chain runs to 110 residues: MEIEKTNRMNALFEFYAALLTDKQMNYIELYYADDYSLAEIAEEFGVSRQAVYDNIKRTEKILEDYEMKLHMYSDYIVRSQIFDQILERYPKDDFLQEQIEILTSIDXRE.

It belongs to the UPF0122 family.

Its function is as follows. Might take part in the signal recognition particle (SRP) pathway. This is inferred from the conservation of its genetic proximity to ftsY/ffh. May be a regulatory protein. This is UPF0122 protein SPG_1182 from Streptococcus pneumoniae serotype 19F (strain G54).